The sequence spans 160 residues: MKLEVLPLDQKTFSAYGDVIETQEREFFHINNGLVERYHDLAKVEVLEQDRTLISINRAQPAAMPIVVHELERHPLGTQAFVPMNGEAFVVIVALGDDKPDLSTLRAFISNGRQGVNYHRNVWHHPLFAWQTVTDFLTVDRGGSDNCDVESIPTHELCFA.

The protein belongs to the ureidoglycolate lyase family. Homodimer. Requires Ni(2+) as cofactor.

It carries out the reaction (S)-ureidoglycolate = urea + glyoxylate. Its pathway is nitrogen metabolism; (S)-allantoin degradation. Functionally, catalyzes the catabolism of the allantoin degradation intermediate (S)-ureidoglycolate, generating urea and glyoxylate. Involved in the utilization of allantoin as nitrogen source. In Salmonella typhimurium (strain LT2 / SGSC1412 / ATCC 700720), this protein is Ureidoglycolate lyase.